Reading from the N-terminus, the 180-residue chain is Mitochondrial inner membrane protease subunit 2 (180 aa).

A helical transmembrane segment spans residues 19–39 (LVGITLWVPVLMFVEQHVVSV). Active-site residues include S46 and K92.

It belongs to the peptidase S26 family. IMP2 subfamily. Heterodimer of 2 subunits, imp1 and imp2.

The protein resides in the mitochondrion inner membrane. Its function is as follows. Catalyzes the removal of transit peptides required for the targeting of proteins from the mitochondrial matrix, across the inner membrane, into the inter-membrane space. The sequence is that of Mitochondrial inner membrane protease subunit 2 from Schizosaccharomyces pombe (strain 972 / ATCC 24843) (Fission yeast).